A 169-amino-acid polypeptide reads, in one-letter code: Protein AIG2 B (169 aa).

15–20 provides a ligand contact to substrate; sequence YGSFQE. E83 (proton acceptor) is an active-site residue.

It belongs to the gamma-glutamylcyclotransferase family. Expressed in roots, leaves and stems.

Its function is as follows. Putative gamma-glutamylcyclotransferase. The protein is Protein AIG2 B of Arabidopsis thaliana (Mouse-ear cress).